Consider the following 135-residue polypeptide: Large ribosomal subunit protein uL18c (135 aa).

It belongs to the universal ribosomal protein uL18 family. As to quaternary structure, part of the 50S ribosomal subunit; contacts the 5S rRNA.

Its subcellular location is the plastid. The protein resides in the chloroplast. Its function is as follows. Binds 5S rRNA, forms part of the central protuberance of the 50S subunit. The protein is Large ribosomal subunit protein uL18c (rpl18) of Phaeodactylum tricornutum (strain CCAP 1055/1).